We begin with the raw amino-acid sequence, 307 residues long: MIKNGRIVKSLAGFYDVESEGEVYQTRARGNFRKKGMKPVVGDFVEFSTEENSEGYILKIGERKNSLIRPSIANIDQAVIIMSTVSPNFSLNLLDRFLVFLEHKNIHPMIYISKLDLLTEMQEGSDKNKKTFNQLTDYEQIKSDYEQIGYDVFFDAEHLVSNLAGKVTVFMGQTGAGKTTLLNKIAPEMQLATGETSEKLGRGRHTTRHVEFFELAGGLIADTPGFSSLDYEVTNRPDLNAAFPEILRISHDCKFRECTHTHEPSCAVKLALENHEILESRYDNYLQILDEINHTRETYEKKRKKQG.

Positions 64–229 constitute a CP-type G domain; that stretch reads KNSLIRPSIA…IADTPGFSSL (166 aa). GTP contacts are provided by residues 113-116 and 172-180; these read SKLD and GQTGAGKTT. Positions 253, 258, 260, and 266 each coordinate Zn(2+).

The protein belongs to the TRAFAC class YlqF/YawG GTPase family. RsgA subfamily. As to quaternary structure, monomer. Associates with 30S ribosomal subunit, binds 16S rRNA. Zn(2+) serves as cofactor.

It is found in the cytoplasm. One of several proteins that assist in the late maturation steps of the functional core of the 30S ribosomal subunit. Helps release RbfA from mature subunits. May play a role in the assembly of ribosomal proteins into the subunit. Circularly permuted GTPase that catalyzes slow GTP hydrolysis, GTPase activity is stimulated by the 30S ribosomal subunit. The chain is Small ribosomal subunit biogenesis GTPase RsgA from Lactococcus lactis subsp. lactis (strain IL1403) (Streptococcus lactis).